A 206-amino-acid chain; its full sequence is LexA repressor (206 aa).

The segment at residues 28–48 is a DNA-binding region (H-T-H motif); it reads VREICAAVGLSSTSTVHGHLT. Residues S127 and K165 each act as for autocatalytic cleavage activity in the active site.

It belongs to the peptidase S24 family. As to quaternary structure, homodimer.

The catalysed reaction is Hydrolysis of Ala-|-Gly bond in repressor LexA.. Its function is as follows. Represses a number of genes involved in the response to DNA damage (SOS response), including recA and lexA. In the presence of single-stranded DNA, RecA interacts with LexA causing an autocatalytic cleavage which disrupts the DNA-binding part of LexA, leading to derepression of the SOS regulon and eventually DNA repair. This is LexA repressor from Lactobacillus delbrueckii subsp. bulgaricus (strain ATCC 11842 / DSM 20081 / BCRC 10696 / JCM 1002 / NBRC 13953 / NCIMB 11778 / NCTC 12712 / WDCM 00102 / Lb 14).